A 467-amino-acid polypeptide reads, in one-letter code: Heat shock factor protein 3 (467 aa).

Residues 16–121 (VPGFLAKLWA…LLENIKRKVS (106 aa)) mediate DNA binding. Positions 128–201 (LKVCAEDLHK…LSLMRGNYIV (74 aa)) are hydrophobic repeat HR-A/B. The interval 364-389 (IQDFLNCIDASLEELQAMLSGKQYSF) is hydrophobic repeat HR-C. The tract at residues 427 to 449 (EDLGASERETAGSKGGQEGTESC) is disordered.

It belongs to the HSF family. As to quaternary structure, homotrimer. Expressed in most tissues. High levels are found in erythrocytes and low levels in liver.

It is found in the cytoplasm. It localises to the nucleus. DNA-binding protein that specifically binds heat shock promoter elements (HSE) and activates transcription. HSF3 binds DNA constitutively only when the C-terminal region is deleted. In Gallus gallus (Chicken), this protein is Heat shock factor protein 3 (HSF3).